Reading from the N-terminus, the 108-residue chain is Parvalbumin beta (108 aa).

2 consecutive EF-hand domains span residues 38–73 (KSTD…FSST) and 77–108 (LTAA…LVKA). Positions 51, 53, 55, 57, 59, 62, 90, 92, 94, 96, and 101 each coordinate Ca(2+).

It belongs to the parvalbumin family.

In muscle, parvalbumin is thought to be involved in relaxation after contraction. It binds two calcium ions. The chain is Parvalbumin beta from Graptemys geographica (Common map turtle).